The primary structure comprises 133 residues: UPF0344 protein SH1980 (133 aa).

Transmembrane regions (helical) follow at residues 1–21, 42–62, 71–91, and 103–123; these read MLHMHIASWALTIILYVIAFL, VFMLLTLFSGFWLLIQEFMAA, MLLTLKMLCGIAVVALMEVSI, and LFWATIILIIITMSLGIILPW.

This sequence belongs to the UPF0344 family.

Its subcellular location is the cell membrane. The protein is UPF0344 protein SH1980 of Staphylococcus haemolyticus (strain JCSC1435).